Reading from the N-terminus, the 473-residue chain is Major myo-inositol transporter IolT (473 aa).

Transmembrane regions (helical) follow at residues 14-34, 49-69, 83-103, 111-131, 146-166, 172-192, 256-276, 295-315, 325-345, 350-370, 389-409, and 411-431; these read IILV…VLNG, AFTE…GAVF, ILFL…APNV, FVLG…LAEM, LMIV…GTTM, VWRF…FGMI, IVFI…NSIM, IGNI…IWLL, MTGL…SLVL, ALPY…QGAI, LGMG…SFTF, and ILLA…LGIC.

Belongs to the major facilitator superfamily. Sugar transporter (TC 2.A.1.1) family.

It localises to the cell membrane. The protein operates within polyol metabolism; myo-inositol degradation into acetyl-CoA. In terms of biological role, major myo-inositol uptake transporter. The chain is Major myo-inositol transporter IolT (iolT) from Bacillus subtilis (strain 168).